An 84-amino-acid polypeptide reads, in one-letter code: Molybdopterin synthase sulfur carrier subunit (84 aa).

Gly-84 is subject to 1-thioglycine; alternate. Glycyl adenylate; alternate is present on Gly-84.

Belongs to the MoaD family. MOCS2A subfamily. Heterotetramer; composed of 2 small (MOCS2A) and 2 large (MOCS2B) subunits. In terms of processing, C-terminal thiocarboxylation occurs in 2 steps, it is first acyl-adenylated (-COAMP) via the hesA/moeB/thiF part of MOCS3, then thiocarboxylated (-COSH) via the rhodanese domain of MOCS3.

The protein resides in the cytoplasm. Its pathway is cofactor biosynthesis; molybdopterin biosynthesis. Functionally, acts as a sulfur carrier required for molybdopterin biosynthesis. Component of the molybdopterin synthase complex that catalyzes the conversion of precursor Z into molybdopterin by mediating the incorporation of 2 sulfur atoms into precursor Z to generate a dithiolene group. In the complex, serves as sulfur donor by being thiocarboxylated (-COSH) at its C-terminus by MOCS3. After interaction with MOCS2B, the sulfur is then transferred to precursor Z to form molybdopterin. This is Molybdopterin synthase sulfur carrier subunit from Caenorhabditis elegans.